Reading from the N-terminus, the 1154-residue chain is Nitric oxide synthase, inducible (1154 aa).

Residues 22 to 58 (KDINNNVEKPPGATPSPSTQDDLKNHKHHNDSPQPLT) are disordered. The DINNN-motif; mediates interaction with SPSB1, SPSB2 and SPSB4 signature appears at 23–27 (DINNN). Residues C107 and C112 each coordinate Zn(2+). Position 197 (C197) interacts with heme b. Residues Q260, W369, Y370, and E374 each coordinate L-arginine. The (6R)-L-erythro-5,6,7,8-tetrahydrobiopterin site is built by R378, I459, W460, and F473. A heme b-binding site is contributed by Y488. Positions 512–532 (LKVLVKAVLFASMLMRKTMAS) are calmodulin-binding. The Flavodoxin-like domain maps to 536–674 (VTILFATETG…AFRCWAVQTF (139 aa)). Residues T542, E543, T544, K546, and S547 each coordinate FMN. The residue at position 572 (Y572) is a Phosphotyrosine. Residues S588, T589, S625, C632, and E658 each contribute to the FMN site. In terms of domain architecture, FAD-binding FR-type spans 727-967 (KNVFTLRLKS…VRSAGNFKLP (241 aa)). R747 contacts NADP(+). Residues H769, R903, Y905, S906, T921, A923, Y927, V940, C941, and S942 each contribute to the FAD site. NADP(+) is bound by residues T981, R1014, S1043, R1044, K1050, Y1052, Q1054, and D1087.

It belongs to the NOS family. Homodimer. Interacts with NHERF1. Interacts with GAPDH; induced by oxidatively-modified low-densitity lipoprotein (LDL(ox)). Interacts with S100A8 and S100A9 to form the iNOS-S100A8/9 transnitrosylase complex. Interacts with SPSB1, SPSB2 and SPSB4. Interacts with ELOC and CUL5 in the presence of SPSB1 or SPSB2 or SPSB4. Forms a complex with ASL, ASS1 and HSP90AA1; the complex regulates cell-autonomous L-arginine synthesis and citrulline recycling while channeling extracellular L-arginine to nitric oxide synthesis pathway. It depends on heme b as a cofactor. FAD serves as cofactor. The cofactor is FMN. (6R)-L-erythro-5,6,7,8-tetrahydrobiopterin is required as a cofactor. Polyubiquitinated; mediated by SPSB1, SPSB2 and SPSB4, leading to proteasomal degradation.

The protein resides in the cytoplasm. Its subcellular location is the cytosol. It catalyses the reaction 2 L-arginine + 3 NADPH + 4 O2 + H(+) = 2 L-citrulline + 2 nitric oxide + 3 NADP(+) + 4 H2O. With respect to regulation, regulated by calcium/calmodulin. Functionally, produces nitric oxide (NO) which is a messenger molecule with diverse functions throughout the body. In macrophages, NO mediates tumoricidal and bactericidal actions. Also has nitrosylase activity and mediates cysteine S-nitrosylation of cytoplasmic target proteins such PTGS2/COX2. As component of the iNOS-S100A8/9 transnitrosylase complex involved in the selective inflammatory stimulus-dependent S-nitrosylation of GAPDH implicated in regulation of the GAIT complex activity and probably multiple targets including ANXA5, EZR, MSN and VIM. Involved in inflammation, enhances the synthesis of pro-inflammatory mediators such as IL6 and IL8. In Canis lupus familiaris (Dog), this protein is Nitric oxide synthase, inducible (NOS2).